A 208-amino-acid chain; its full sequence is Translation initiation factor 2 subunit beta (208 aa).

In terms of domain architecture, TRAM spans 145-203 (VIEEGETYELRIESVGSKGDGIAKVDKYLIFVPNTSKGEIVKAKVKKISGTLAFAEIVE).

It belongs to the eIF-2-beta/eIF-5 family. As to quaternary structure, heterotrimer composed of an alpha, a beta and a gamma chain.

EIF-2 functions in the early steps of protein synthesis by forming a ternary complex with GTP and initiator tRNA. In Methanothrix thermoacetophila (strain DSM 6194 / JCM 14653 / NBRC 101360 / PT) (Methanosaeta thermophila), this protein is Translation initiation factor 2 subunit beta.